A 354-amino-acid polypeptide reads, in one-letter code: Opsin-5 (354 aa).

Topologically, residues 1 to 33 are extracellular; that stretch reads MALNHTALPQDERLPHYLRDGDPFASKLSWEAD. A glycan (N-linked (GlcNAc...) asparagine) is linked at Asn-4. A helical transmembrane segment spans residues 34 to 54; sequence LVAGFYLTIIGILSTFGNGYV. The Cytoplasmic segment spans residues 55-74; the sequence is LYMSSRRKKKLRPAEIMTIN. Residues 75–95 traverse the membrane as a helical segment; the sequence is LAVCDLGISVVGKPFTIISCF. Residues 96–108 are Extracellular-facing; that stretch reads CHRWVFGWIGCRW. A disulfide bond links Cys-106 and Cys-183. Residues 109 to 129 traverse the membrane as a helical segment; it reads YGWAGFFFGCGSLITMTAVSL. The Cytoplasmic portion of the chain corresponds to 130–150; it reads DRYLKICYLSYGVWLKRKHAY. The chain crosses the membrane as a helical span at residues 151-171; that stretch reads ICLAAIWAYASFWTTMPLVGL. Residues 172–197 are Extracellular-facing; sequence GDYVPEPFGTSCTLDWWLAQASVGGQ. A helical transmembrane segment spans residues 198-218; it reads VFILNILFFCLLLPTAVIVFS. The Cytoplasmic portion of the chain corresponds to 219-252; the sequence is YVKIIAKVKSSSKEVAHFDSRIHSSHVLEMKLTK. Residues 253–273 traverse the membrane as a helical segment; it reads VAMLICAGFLIAWIPYAVVSV. Over 274 to 288 the chain is Extracellular; that stretch reads WSAFGRPDSIPIQLS. Residues 289–309 traverse the membrane as a helical segment; the sequence is VVPTLLAKSAAMYNPIIYQVI. Lys-296 is modified (N6-(retinylidene)lysine). Topologically, residues 310-353 are cytoplasmic; it reads DYKFACCQTGGLKATKKKSLEGFRLHTVTTVRKSSAVLEIHEEW. Residues Cys-315 and Cys-316 are each lipidated (S-palmitoyl cysteine).

Belongs to the G-protein coupled receptor 1 family. Opsin subfamily. Post-translationally, it is uncertain whether Cys-315 or Cys-316 is palmitoylated. In terms of tissue distribution, detected in brain and retina and cell lines derived from neural retina.

The protein resides in the cell membrane. Its function is as follows. G-protein coupled receptor which selectively activates G(i) type G proteins via ultraviolet A (UVA) light-mediated activation in the retina. Preferentially binds the chromophore 11-cis retinal and is a bistable protein that displays emission peaks at 380 nm (UVA light) and 470 nm (blue light). Required for the light-response in the inner plexiform layer, and contributes to the regulation of the light-response in the nerve fiber layer, via phosphorylated DAT/SLC6A3 dopamine uptake. Involved in local corneal and retinal circadian rhythm photoentrainment via modulation of the UVA light-induced phase-shift of the retina clock. Acts as a circadian photoreceptor in the outer ear, via modulation of circadian clock-gene expression in response to violet light during the light-to-dark transition phase and night phase of the circadian cycle. Required in the retina to negatively regulate hyaloid vessel regression during postnatal development via light-dependent OPN5-SLC32A1-DRD2-VEGFR2 signaling. Involved in the light-dependent regulation of retina and vitreous compartment dopamine levels. The sequence is that of Opsin-5 (OPN5) from Homo sapiens (Human).